The sequence spans 184 residues: Elongation factor P (184 aa).

It belongs to the elongation factor P family.

Its subcellular location is the cytoplasm. It participates in protein biosynthesis; polypeptide chain elongation. Its function is as follows. Involved in peptide bond synthesis. Stimulates efficient translation and peptide-bond synthesis on native or reconstituted 70S ribosomes in vitro. Probably functions indirectly by altering the affinity of the ribosome for aminoacyl-tRNA, thus increasing their reactivity as acceptors for peptidyl transferase. This Acidovorax ebreus (strain TPSY) (Diaphorobacter sp. (strain TPSY)) protein is Elongation factor P.